A 388-amino-acid chain; its full sequence is Mannitol-1-phosphate 5-dehydrogenase (388 aa).

4-15 (AVHFGAGNIGRG) provides a ligand contact to NAD(+).

Belongs to the mannitol dehydrogenase family.

It catalyses the reaction D-mannitol 1-phosphate + NAD(+) = beta-D-fructose 6-phosphate + NADH + H(+). This is Mannitol-1-phosphate 5-dehydrogenase from Thermoanaerobacter pseudethanolicus (strain ATCC 33223 / 39E) (Clostridium thermohydrosulfuricum).